A 183-amino-acid polypeptide reads, in one-letter code: Small ribosomal subunit protein uS4 (183 aa).

The S4 RNA-binding domain occupies 106–168 (RRLQTQVYRQ…AGSPLAREGH (63 aa)).

This sequence belongs to the universal ribosomal protein uS4 family. As to quaternary structure, part of the 30S ribosomal subunit. Contacts protein S5. The interaction surface between S4 and S5 is involved in control of translational fidelity.

In terms of biological role, one of the primary rRNA binding proteins, it binds directly to 16S rRNA where it nucleates assembly of the body of the 30S subunit. Its function is as follows. With S5 and S12 plays an important role in translational accuracy. In Methanothrix thermoacetophila (strain DSM 6194 / JCM 14653 / NBRC 101360 / PT) (Methanosaeta thermophila), this protein is Small ribosomal subunit protein uS4.